We begin with the raw amino-acid sequence, 573 residues long: Ascochitine biosynthesis cluster transcriptional regulator (573 aa).

The protein resides in the nucleus. Functionally, transcription factor that regulates the expression of the gene cluster that mediates the biosynthesis of the mycotoxin ascochitine, an o-quinone methide that plays a possible protective role against other microbial competitors in nature and is considered to be important for pathogenicity of legume-associated Didymella species. The sequence is that of Ascochitine biosynthesis cluster transcriptional regulator from Didymella fabae (Leaf and pod spot disease fungus).